We begin with the raw amino-acid sequence, 427 residues long: Alpha/beta hydrolase gkaG (427 aa).

The active site involves Asp368.

This sequence belongs to the AB hydrolase superfamily. As to quaternary structure, homodimer.

It functions in the pathway mycotoxin biosynthesis. Alpha/beta hydrolase; part of the gene cluster that mediates the biosynthesis of GKK1032, fungal natural products containing a macrocyclic para-cyclophane connected to a decahydrofluorene ring system that show potent antitumor activities. Within the pathway, gkaG catalyzes the Knoevenagel condensation that affords the 3-pyrrolin-2-one ring, using as substrate the polyketide-tyrosyl acyl thioester product of gkaA. The pathway begins with the PKS-NRPS gkaA which, with the help of the trans-enoyl reductase gkaC, synthesizes the polyketide-tyrosyl acyl thioester product which can be reductively off-loaded by the terminal reductase (R) domain in gkaA. The alpha/beta hydrolase gkaG is then required to catalyze the subsequent Knoevenagel condensation that affords the 3-pyrrolin-2-one ring, whereas the three proteins gkaB, gkaX and gkaZ then function synergistically to form the cyclophane. This is Alpha/beta hydrolase gkaG from Penicillium citrinum.